Here is a 137-residue protein sequence, read N- to C-terminus: Large ribosomal subunit protein uL16 (137 aa).

It belongs to the universal ribosomal protein uL16 family. In terms of assembly, part of the 50S ribosomal subunit.

Binds 23S rRNA and is also seen to make contacts with the A and possibly P site tRNAs. The polypeptide is Large ribosomal subunit protein uL16 (Spiroplasma citri).